We begin with the raw amino-acid sequence, 1403 residues long: Baculoviral IAP repeat-containing protein 1a (1403 aa).

BIR repeat units follow at residues 63–128 (RLKT…EFLQ), 162–228 (RLES…EFLQ), and 281–346 (RMDT…VFLQ). C315, C318, H335, and C342 together coordinate Zn(2+). The NACHT domain maps to 464–758 (SVMCVEGETG…EFLAAMRLTE (295 aa)). Position 476 (K476) interacts with ATP.

Interacts (via NACHT domain) with APAF1 (via CARD and NACHT domains).

Functionally, anti-apoptotic protein which acts by inhibiting the activities of CASP3, CASP7 and CASP9. Can inhibit the autocleavage of pro-CASP9 and cleavage of pro-CASP3 by CASP9. Capable of inhibiting CASP9 autoproteolysis at 'Asp-315' and decreasing the rate of auto proteolysis at 'Asp-330'. Acts as a mediator of neuronal survival in pathological conditions. Prevents motor-neuron apoptosis induced by a variety of signals. The sequence is that of Baculoviral IAP repeat-containing protein 1a (Naip1) from Mus musculus (Mouse).